Consider the following 62-residue polypeptide: MALSFNQLSLTHFSSLTFLKRLQYILIVSITPLPNKVGSLIIQYFSFTKSNNGRNTSKVNIL.

This is an uncharacterized protein from Homo sapiens (Human).